The sequence spans 323 residues: Dehydrogenase/reductase SDR family member 7B (323 aa).

Over 1–17 the chain is Cytoplasmic; sequence MISPSFRKGMLKERVMD. A helical; Signal-anchor for type II membrane protein transmembrane segment spans residues 18–38; that stretch reads LASQTTILPLLFGCLGIFSLF. Over 39-323 the chain is Lumenal; the sequence is RLLQRIRSKA…ARKERKSKSS (285 aa). NAD(+) is bound by residues Ser62 and Leu64. Position 192 (Ser192) interacts with substrate. NAD(+)-binding residues include Tyr205, Lys209, and Thr240. The active-site Proton acceptor is the Tyr205.

This sequence belongs to the short-chain dehydrogenases/reductases (SDR) family.

The protein resides in the endoplasmic reticulum membrane. Putative oxidoreductase. This Mus musculus (Mouse) protein is Dehydrogenase/reductase SDR family member 7B.